Reading from the N-terminus, the 81-residue chain is Small cysteine-rich protein 1 2 (81 aa).

The N-terminal stretch at 1-19 is a signal peptide; sequence MGVNFNICLLLLLVATISS. Positions 20 to 39 are excised as a propeptide; it reads QPLKATEKDDSTDENPFGIY.

This sequence belongs to the Cnidaria small cysteine-rich protein (SCRiP) family. alpha subfamily. In terms of processing, the basic myotoxic domain of rattlesnake crotamine toxins (with 6 Cys residues) has been detected in this protein. However, this protein contains 2 additional Cys at the C-terminal region. Hence, this protein may contain 4 disulfide bonds instead of the 3 suggested by the myotoxin domain.

Its subcellular location is the secreted. It is found in the nematocyst. Induces neurotoxic symptoms on zebrafish. Has also been claimed to be implied in calcification, but tests on homolog proteins suggest that proteins of this family have a neurotoxic function and not a calcification function. This chain is Small cysteine-rich protein 1 2, found in Montipora capitata (Rice coral).